Reading from the N-terminus, the 505-residue chain is Phosphomevalonate kinase, peroxisomal (505 aa).

Alanine 2 is subject to N-acetylalanine. A Peroxisomal targeting signal PTS2 motif is present at residues aspartate 57–leucine 65. Valine 177 to alanine 187 is a binding site for ATP.

Belongs to the GHMP kinase family. Mevalonate kinase subfamily.

The protein resides in the peroxisome. It carries out the reaction (R)-5-phosphomevalonate + ATP = (R)-5-diphosphomevalonate + ADP. Its pathway is isoprenoid biosynthesis; isopentenyl diphosphate biosynthesis via mevalonate pathway; isopentenyl diphosphate from (R)-mevalonate: step 2/3. This is Phosphomevalonate kinase, peroxisomal from Arabidopsis thaliana (Mouse-ear cress).